The following is a 390-amino-acid chain: Succinate--CoA ligase [ADP-forming] subunit beta (390 aa).

Positions K9–E244 constitute an ATP-grasp domain. ATP is bound by residues K46, G53–G55, E99, L102, and E107. The Mg(2+) site is built by N199 and D213. Substrate is bound by residues N264 and G321 to V323.

Belongs to the succinate/malate CoA ligase beta subunit family. As to quaternary structure, heterotetramer of two alpha and two beta subunits. Mg(2+) serves as cofactor.

It catalyses the reaction succinate + ATP + CoA = succinyl-CoA + ADP + phosphate. It carries out the reaction GTP + succinate + CoA = succinyl-CoA + GDP + phosphate. It functions in the pathway carbohydrate metabolism; tricarboxylic acid cycle; succinate from succinyl-CoA (ligase route): step 1/1. In terms of biological role, succinyl-CoA synthetase functions in the citric acid cycle (TCA), coupling the hydrolysis of succinyl-CoA to the synthesis of either ATP or GTP and thus represents the only step of substrate-level phosphorylation in the TCA. The beta subunit provides nucleotide specificity of the enzyme and binds the substrate succinate, while the binding sites for coenzyme A and phosphate are found in the alpha subunit. The protein is Succinate--CoA ligase [ADP-forming] subunit beta of Campylobacter curvus (strain 525.92).